A 473-amino-acid polypeptide reads, in one-letter code: 7-dehydrocholesterol reductase (473 aa).

Residues 1 to 20 (MGERRRANASRGDKKVANGE) form a disordered region. The next 6 membrane-spanning stretches (helical) occupy residues 36 to 56 (FSLASVIFLLAFAPLIVYYFV), 97 to 117 (IYLAWVSFQVFLYMFLPDILH), 175 to 195 (WIPLLWCANLLGYSVATFALV), 264 to 284 (VTNSMILVNVLQAIYVVDFFW), 304 to 324 (LGWGDCVWLPYLYTLQGLYLV), and 329 to 349 (ELSTTAAVAVLLLGLIGYYIF). NADP(+) is bound by residues lysine 356, arginine 360, methionine 393, tryptophan 398, and 405-406 (NY). Residues 419 to 439 (ACGFDHLLPYFYFIYMTILLV) form a helical membrane-spanning segment. NADP(+) contacts are provided by residues aspartate 445, 449–453 (CSSKY), and tyrosine 460.

Belongs to the ERG4/ERG24 family.

It is found in the endoplasmic reticulum membrane. The enzyme catalyses cholesterol + NADP(+) = 7-dehydrocholesterol + NADPH + H(+). It carries out the reaction 7-dehydrodesmosterol + NADPH + H(+) = desmosterol + NADP(+). It functions in the pathway steroid biosynthesis; cholesterol biosynthesis. Functionally, catalyzes the last step of the cholesterol synthesis pathway, which transforms cholesta-5,7-dien-3beta-ol (7-dehydrocholesterol,7-DHC) into cholesterol by reducing the C7-C8 double bond of its sterol core. Can also metabolize cholesta-5,7,24-trien-3beta-ol (7-dehydrodemosterol, 7-DHD) to desmosterol, which is then metabolized by the Delta(24)-sterol reductase (DHCR24) to cholesterol. Modulates ferroptosis (a form of regulated cell death driven by iron-dependent lipid peroxidation) through the metabolic breakdown of the anti-ferroptotic metabolites 7-DHC and 7-DHD which, when accumulated, divert the propagation of peroxyl radical-mediated damage from phospholipid components to its sterol core, protecting plasma and mitochondrial membranes from phospholipid autoxidation. The protein is 7-dehydrocholesterol reductase (dhcr7) of Xenopus laevis (African clawed frog).